We begin with the raw amino-acid sequence, 339 residues long: Dehydrogenase/reductase SDR family member 7 (339 aa).

Positions 1–28 are cleaved as a signal peptide; that stretch reads MNWELLLWLLVLCALLLLLVQLLRFLRA. NAD(+) is bound by residues S60 and I62. S190 provides a ligand contact to substrate. NAD(+)-binding residues include Y203, K207, and S239. The active-site Proton acceptor is Y203.

Belongs to the short-chain dehydrogenases/reductases (SDR) family. As to expression, found predominantly in the adrenal glands, liver, thyroid, prostate, small intestine, colon, stomach, kidney and brain. Lower levels observed in skeletal muscle, the lung and the spleen.

It localises to the endoplasmic reticulum membrane. It catalyses the reaction all-trans-retinol + NADP(+) = all-trans-retinal + NADPH + H(+). It carries out the reaction 5alpha-androstane-3alpha,17beta-diol + NADP(+) = 17beta-hydroxy-5alpha-androstan-3-one + NADPH + H(+). In terms of biological role, NADPH-dependent oxidoreductase which catalyzes the reduction of a variety of compounds bearing carbonyl groups including steroids, retinoids and xenobiotics. Catalyzes the reduction/inactivation of 5alpha-dihydrotestosterone to 3alpha-androstanediol, with a possible role in the modulation of androgen receptor function. Involved in the reduction of all-trans-retinal to all-trans-retinol. Converts cortisone to 20beta-dihydrocortisone in vitro, although the physiological relevance of this activity is questionable. Reduces exogenous compounds such as quinones (1,2-naphtoquinone, 9,10-phenantrenequinone and benzoquinone) and other xenobiotics (alpha-diketones) in vitro, suggesting a role in the biotransformation of xenobiotics with carbonyl group. A dehydrogenase activity has not been detected so far. May play a role as tumor suppressor. This is Dehydrogenase/reductase SDR family member 7 from Homo sapiens (Human).